Consider the following 129-residue polypeptide: Holo-[acyl-carrier-protein] synthase (129 aa).

The Mg(2+) site is built by D8 and E58.

The protein belongs to the P-Pant transferase superfamily. AcpS family. The cofactor is Mg(2+).

The protein resides in the cytoplasm. It carries out the reaction apo-[ACP] + CoA = holo-[ACP] + adenosine 3',5'-bisphosphate + H(+). Its function is as follows. Transfers the 4'-phosphopantetheine moiety from coenzyme A to a Ser of acyl-carrier-protein. This chain is Holo-[acyl-carrier-protein] synthase, found in Geobacillus kaustophilus (strain HTA426).